Here is a 320-residue protein sequence, read N- to C-terminus: 3-hydroxybenzoate 6-hydroxylase 2 (320 aa).

The disordered stretch occupies residues 1 to 25; the sequence is MRSTNTRSARSRPTKRSVNASATPT. The span at 16 to 25 shows a compositional bias: polar residues; the sequence is RSVNASATPT.

The protein belongs to the 3-hydroxybenzoate 6-hydroxylase family. FAD is required as a cofactor.

It catalyses the reaction 3-hydroxybenzoate + NADH + O2 + H(+) = 2,5-dihydroxybenzoate + NAD(+) + H2O. Its function is as follows. Catalyzes the conversion of 3-hydroxybenzoate to gentisate. The chain is 3-hydroxybenzoate 6-hydroxylase 2 (hbzD) from Aquipseudomonas alcaligenes (Pseudomonas alcaligenes).